Consider the following 184-residue polypeptide: CKLF-like MARVEL transmembrane domain-containing protein 3 (184 aa).

Acidic residues predominate over residues Met-1 to Pro-12. Residues Met-1 to Arg-22 form a disordered region. Residues Phe-36 to Ala-155 form the MARVEL domain. A run of 3 helical transmembrane segments spans residues Ala-64–Ala-84, Leu-96–Ile-116, and Ala-131–Phe-151. The interval Ser-163–Asp-184 is disordered. Over residues Glu-175–Asp-184 the composition is skewed to acidic residues.

Belongs to the chemokine-like factor family.

The protein localises to the membrane. This is CKLF-like MARVEL transmembrane domain-containing protein 3 (Cmtm3) from Mus musculus (Mouse).